The primary structure comprises 104 residues: Large ribosomal subunit protein uL24 (104 aa).

This sequence belongs to the universal ribosomal protein uL24 family. In terms of assembly, part of the 50S ribosomal subunit.

One of two assembly initiator proteins, it binds directly to the 5'-end of the 23S rRNA, where it nucleates assembly of the 50S subunit. In terms of biological role, one of the proteins that surrounds the polypeptide exit tunnel on the outside of the subunit. The sequence is that of Large ribosomal subunit protein uL24 from Shewanella amazonensis (strain ATCC BAA-1098 / SB2B).